The sequence spans 397 residues: Riboflavin biosynthesis protein RibBA (397 aa).

The interval 1 to 199 is DHBP synthase; it reads MFHRIEEALE…IEDLIAYRRH (199 aa). Residues 26–27, D31, 138–142, and E162 each bind D-ribulose 5-phosphate; these read RE and RAGHT. A Mg(2+)-binding site is contributed by E27. H141 contributes to the Mg(2+) binding site. The segment at 200–397 is GTP cyclohydrolase II; sequence HETLVTREVE…VNKLGHLLNL (198 aa). GTP is bound at residue 250–254; that stretch reads RVHSE. Residues C255, C266, and C268 each coordinate Zn(2+). Residues Q271, 293 to 295, and T315 contribute to the GTP site; that span reads EGR. Residue D327 is the Proton acceptor; for GTP cyclohydrolase activity of the active site. The active-site Nucleophile; for GTP cyclohydrolase activity is R329. Residues T350 and K355 each contribute to the GTP site.

It in the N-terminal section; belongs to the DHBP synthase family. This sequence in the C-terminal section; belongs to the GTP cyclohydrolase II family. Mg(2+) serves as cofactor. The cofactor is Mn(2+). Requires Zn(2+) as cofactor.

The enzyme catalyses D-ribulose 5-phosphate = (2S)-2-hydroxy-3-oxobutyl phosphate + formate + H(+). It catalyses the reaction GTP + 4 H2O = 2,5-diamino-6-hydroxy-4-(5-phosphoribosylamino)-pyrimidine + formate + 2 phosphate + 3 H(+). Its pathway is cofactor biosynthesis; riboflavin biosynthesis; 2-hydroxy-3-oxobutyl phosphate from D-ribulose 5-phosphate: step 1/1. The protein operates within cofactor biosynthesis; riboflavin biosynthesis; 5-amino-6-(D-ribitylamino)uracil from GTP: step 1/4. In terms of biological role, catalyzes the conversion of D-ribulose 5-phosphate to formate and 3,4-dihydroxy-2-butanone 4-phosphate. Functionally, catalyzes the conversion of GTP to 2,5-diamino-6-ribosylamino-4(3H)-pyrimidinone 5'-phosphate (DARP), formate and pyrophosphate. The polypeptide is Riboflavin biosynthesis protein RibBA (Bacillus cereus (strain AH187)).